The following is a 150-amino-acid chain: D-aminoacyl-tRNA deacylase (150 aa).

A Gly-cisPro motif, important for rejection of L-amino acids motif is present at residues 136-137; that stretch reads GP.

This sequence belongs to the DTD family. As to quaternary structure, homodimer.

The protein resides in the cytoplasm. The enzyme catalyses glycyl-tRNA(Ala) + H2O = tRNA(Ala) + glycine + H(+). It carries out the reaction a D-aminoacyl-tRNA + H2O = a tRNA + a D-alpha-amino acid + H(+). In terms of biological role, an aminoacyl-tRNA editing enzyme that deacylates mischarged D-aminoacyl-tRNAs. Also deacylates mischarged glycyl-tRNA(Ala), protecting cells against glycine mischarging by AlaRS. Acts via tRNA-based rather than protein-based catalysis; rejects L-amino acids rather than detecting D-amino acids in the active site. By recycling D-aminoacyl-tRNA to D-amino acids and free tRNA molecules, this enzyme counteracts the toxicity associated with the formation of D-aminoacyl-tRNA entities in vivo and helps enforce protein L-homochirality. This is D-aminoacyl-tRNA deacylase from Staphylococcus carnosus (strain TM300).